The sequence spans 540 residues: Sensory neuron membrane protein 1 (540 aa).

The Cytoplasmic segment spans residues 1–105 (MRTDDPVIGN…WIFRPDLSKP (105 aa)). Residues 106-126 (LTGDEMITIPHPLILGALLMV) form a helical membrane-spanning segment. Residues 127–436 (QRDREAMMPL…YTLFLGLRFN (310 aa)) are Extracellular-facing. 2 N-linked (GlcNAc...) asparagine glycosylation sites follow: asparagine 193 and asparagine 206. 3 disulfide bridges follow: cysteine 245–cysteine 310, cysteine 274–cysteine 330, and cysteine 312–cysteine 319. Asparagine 418 carries an N-linked (GlcNAc...) asparagine glycan. A helical membrane pass occupies residues 437 to 457 (TAVKWLTIIIGTIGTIVGGFM). Residues 458 to 540 (HYKRTTKMVN…VTVTEMQERY (83 aa)) are Cytoplasmic-facing.

The protein belongs to the CD36 family.

The protein resides in the cell membrane. In terms of biological role, plays an olfactory role that is not restricted to pheromone sensitivity. The protein is Sensory neuron membrane protein 1 of Aedes aegypti (Yellowfever mosquito).